Consider the following 353-residue polypeptide: DNA polymerase IV (353 aa).

A UmuC domain is found at 6 to 187 (IIHIDCDCFY…LPVTKLHGVG (182 aa)). The Mg(2+) site is built by Asp-10 and Asp-105. The active site involves Glu-106.

Belongs to the DNA polymerase type-Y family. As to quaternary structure, monomer. Requires Mg(2+) as cofactor.

It localises to the cytoplasm. It carries out the reaction DNA(n) + a 2'-deoxyribonucleoside 5'-triphosphate = DNA(n+1) + diphosphate. In terms of biological role, poorly processive, error-prone DNA polymerase involved in untargeted mutagenesis. Copies undamaged DNA at stalled replication forks, which arise in vivo from mismatched or misaligned primer ends. These misaligned primers can be extended by PolIV. Exhibits no 3'-5' exonuclease (proofreading) activity. May be involved in translesional synthesis, in conjunction with the beta clamp from PolIII. The sequence is that of DNA polymerase IV from Pseudomonas syringae pv. tomato (strain ATCC BAA-871 / DC3000).